Reading from the N-terminus, the 399-residue chain is Elongation factor Tu (399 aa).

The region spanning 10 to 204 (KPHVNIGTIG…SVDESIPEPE (195 aa)) is the tr-type G domain. Residues 19 to 26 (GHVDHGKT) are G1. 19–26 (GHVDHGKT) serves as a coordination point for GTP. Thr26 serves as a coordination point for Mg(2+). The tract at residues 60 to 64 (GITIN) is G2. The tract at residues 81-84 (DCPG) is G3. GTP contacts are provided by residues 81 to 85 (DCPGH) and 136 to 139 (NKCD). Positions 136–139 (NKCD) are G4. A G5 region spans residues 174–176 (SAL).

Belongs to the TRAFAC class translation factor GTPase superfamily. Classic translation factor GTPase family. EF-Tu/EF-1A subfamily. As to quaternary structure, monomer.

It is found in the cytoplasm. It catalyses the reaction GTP + H2O = GDP + phosphate + H(+). Its function is as follows. GTP hydrolase that promotes the GTP-dependent binding of aminoacyl-tRNA to the A-site of ribosomes during protein biosynthesis. This Prochlorococcus marinus (strain MIT 9211) protein is Elongation factor Tu.